The following is a 389-amino-acid chain: Succinate--CoA ligase [ADP-forming] subunit beta (389 aa).

The ATP-grasp domain maps to 9–244; it reads KEIFRSMGVA…LDEEDPKEIE (236 aa). ATP contacts are provided by residues Lys46, 53–55, Glu99, Cys102, and Glu107; that span reads GRG. Mg(2+) is bound by residues Asn199 and Asp213. Residues Asn264 and 321–323 each bind substrate; that span reads GIM.

It belongs to the succinate/malate CoA ligase beta subunit family. Heterotetramer of two alpha and two beta subunits. The cofactor is Mg(2+).

It carries out the reaction succinate + ATP + CoA = succinyl-CoA + ADP + phosphate. The catalysed reaction is GTP + succinate + CoA = succinyl-CoA + GDP + phosphate. The protein operates within carbohydrate metabolism; tricarboxylic acid cycle; succinate from succinyl-CoA (ligase route): step 1/1. In terms of biological role, succinyl-CoA synthetase functions in the citric acid cycle (TCA), coupling the hydrolysis of succinyl-CoA to the synthesis of either ATP or GTP and thus represents the only step of substrate-level phosphorylation in the TCA. The beta subunit provides nucleotide specificity of the enzyme and binds the substrate succinate, while the binding sites for coenzyme A and phosphate are found in the alpha subunit. The sequence is that of Succinate--CoA ligase [ADP-forming] subunit beta from Macrococcus caseolyticus (strain JCSC5402) (Macrococcoides caseolyticum).